The following is a 571-amino-acid chain: uncharacterized protein (571 aa).

Helical transmembrane passes span 10–29 (VRLH…HFIG), 36–55 (VSLG…GLLF), 65–87 (WAFF…FASL), 96–118 (ALAV…LFRF), and 166–188 (ATTY…PRLL). Residues 294-378 (TEVDDQELLS…IATAARNLGF (85 aa)) form the RCK C-terminal domain. 6 helical membrane-spanning segments follow: residues 388–406 (LVYL…LLQV), 411–433 (VPLG…WLYS), 446–465 (LRLL…GLAA), 480–502 (LFAK…GLLL), 509–531 (LPPV…LNAL), and 546–568 (VPFA…CAVA).

The protein belongs to the AAE transporter (TC 2.A.81) family.

Its subcellular location is the cell membrane. This is an uncharacterized protein from Bordetella parapertussis (strain 12822 / ATCC BAA-587 / NCTC 13253).